The sequence spans 424 residues: MASSNLIKQLQERGLVAQVTDEEALAERLAQGPIALYCGFDPTADSLHLGHLVPLLCLKRFQQAGHKPVALVGGATGLIGDPSFKAAERKLNTEETVQEWVDKIRKQVAPFLDFDCGENSAIAANNYDWFGNMNVLTFLRDIGKHFSVNQMINKEAVKQRLNREDQGISFIEFSYNLLQGYDFACLNKQYGVVLQIGGSDQWGNITSGIDLTRRLHQNQVFGLTVPLITKADGTKFGKTEGGAVWLDPKKTSPYKFYQFWINTADADVYRFLKFFTFMSIEEINALEEEDKNSGKAPRAQYVLAEQVTRLVHGEEGLQAAKRITECLFSGSLSALSEADFEQLAQDGVPMVEMEKGADLMQALVDSELQPSRGQARKTIASNAITINGEKQSDPEYFFKEEDRLFGRFTLLRRGKKNYCLICWK.

Residue Tyr-37 participates in L-tyrosine binding. Positions 42-51 match the 'HIGH' region motif; sequence PTADSLHLGH. Position 144 is an N6-acetyllysine (Lys-144). 2 residues coordinate L-tyrosine: Tyr-175 and Gln-179. The 'KMSKS' region signature appears at 235-239; that stretch reads KFGKT. Lys-238 provides a ligand contact to ATP. In terms of domain architecture, S4 RNA-binding spans 357–414; it reads ADLMQALVDSELQPSRGQARKTIASNAITINGEKQSDPEYFFKEEDRLFGRFTLLRRG.

This sequence belongs to the class-I aminoacyl-tRNA synthetase family. TyrS type 1 subfamily. In terms of assembly, homodimer.

The protein resides in the cytoplasm. It catalyses the reaction tRNA(Tyr) + L-tyrosine + ATP = L-tyrosyl-tRNA(Tyr) + AMP + diphosphate + H(+). Catalyzes the attachment of tyrosine to tRNA(Tyr) in a two-step reaction: tyrosine is first activated by ATP to form Tyr-AMP and then transferred to the acceptor end of tRNA(Tyr). The chain is Tyrosine--tRNA ligase from Shigella dysenteriae serotype 1 (strain Sd197).